The sequence spans 235 residues: Peptidyl-tRNA hydrolase (235 aa).

Position 14 (Tyr14) interacts with tRNA. Catalysis depends on His19, which acts as the Proton acceptor. Phe64, Asn66, and Asn112 together coordinate tRNA. The tract at residues 186–235 (RTAPPRSSGGSPKTDKPAKATREPPPAAKPEATPEEETRSPLQRLVDKFR) is disordered. The segment covering 198–207 (KTDKPAKATR) has biased composition (basic and acidic residues).

Belongs to the PTH family. Monomer.

The protein localises to the cytoplasm. It carries out the reaction an N-acyl-L-alpha-aminoacyl-tRNA + H2O = an N-acyl-L-amino acid + a tRNA + H(+). Functionally, hydrolyzes ribosome-free peptidyl-tRNAs (with 1 or more amino acids incorporated), which drop off the ribosome during protein synthesis, or as a result of ribosome stalling. Its function is as follows. Catalyzes the release of premature peptidyl moieties from peptidyl-tRNA molecules trapped in stalled 50S ribosomal subunits, and thus maintains levels of free tRNAs and 50S ribosomes. The sequence is that of Peptidyl-tRNA hydrolase from Dinoroseobacter shibae (strain DSM 16493 / NCIMB 14021 / DFL 12).